Consider the following 78-residue polypeptide: Translation initiation factor IF-1, plastid (78 aa).

The 72-residue stretch at 1-72 folds into the S1-like domain; that stretch reads MKKQDLIDME…TKGRITYRLR (72 aa).

Belongs to the IF-1 family. In terms of assembly, component of the 30S ribosomal translation pre-initiation complex which assembles on the 30S ribosome in the order IF-2 and IF-3, IF-1 and N-formylmethionyl-tRNA(fMet); mRNA recruitment can occur at any time during PIC assembly.

It is found in the plastid. In terms of biological role, one of the essential components for the initiation of protein synthesis. Stabilizes the binding of IF-2 and IF-3 on the 30S subunit to which N-formylmethionyl-tRNA(fMet) subsequently binds. Helps modulate mRNA selection, yielding the 30S pre-initiation complex (PIC). Upon addition of the 50S ribosomal subunit IF-1, IF-2 and IF-3 are released leaving the mature 70S translation initiation complex. The chain is Translation initiation factor IF-1, plastid from Aneura mirabilis (Parasitic liverwort).